Consider the following 297-residue polypeptide: 4-hydroxy-tetrahydrodipicolinate synthase (297 aa).

Residue T46 coordinates pyruvate. Y134 functions as the Proton donor/acceptor in the catalytic mechanism. K163 functions as the Schiff-base intermediate with substrate in the catalytic mechanism. Residue I205 coordinates pyruvate.

This sequence belongs to the DapA family. In terms of assembly, homotetramer; dimer of dimers.

It is found in the cytoplasm. It catalyses the reaction L-aspartate 4-semialdehyde + pyruvate = (2S,4S)-4-hydroxy-2,3,4,5-tetrahydrodipicolinate + H2O + H(+). Its pathway is amino-acid biosynthesis; L-lysine biosynthesis via DAP pathway; (S)-tetrahydrodipicolinate from L-aspartate: step 3/4. Its function is as follows. Catalyzes the condensation of (S)-aspartate-beta-semialdehyde [(S)-ASA] and pyruvate to 4-hydroxy-tetrahydrodipicolinate (HTPA). The chain is 4-hydroxy-tetrahydrodipicolinate synthase from Thermoanaerobacter pseudethanolicus (strain ATCC 33223 / 39E) (Clostridium thermohydrosulfuricum).